A 367-amino-acid polypeptide reads, in one-letter code: MSVHRDAIRAARSLVVKVGTNALTTSSGVFDSSRLARLVDAIEARMKAGTDVVIVSSGAIAAGIEPLGLSLRPKDLATKQAAASVGQVALVNSWSAAFARYGRAVGQVLLTAQDISMRVQHTNAQRTLDRLRALHAVAIVNENDTVATNEIRFGDNDRLSAVVAHLVGAEALVLLSDINGLYDSDPRKNTGARFVPEVTGSADLDGVVASRGSSLGTGGMVSKMSSALLAADAGVPVLLAAAADAATALTDASVGTVFAARPDRMSARRFWLRYAADSVGSLTLDEGAVWAVVQQRRSLLAAGITAVSGRFYGGDVVELRGPDATMVARGVVAYDATELAAMMGRSTSELPCELRRPAVHADDLVSI.

Lysine 17 is a binding site for ATP. The substrate site is built by serine 57, aspartate 144, and asparagine 156. ATP is bound by residues 176 to 177 and 217 to 223; these read SD and TGGMVSK. A PUA domain is found at 279–357; sequence VGSLTLDEGA…SELPCELRRP (79 aa).

The protein belongs to the glutamate 5-kinase family.

It is found in the cytoplasm. The enzyme catalyses L-glutamate + ATP = L-glutamyl 5-phosphate + ADP. Its pathway is amino-acid biosynthesis; L-proline biosynthesis; L-glutamate 5-semialdehyde from L-glutamate: step 1/2. Functionally, catalyzes the transfer of a phosphate group to glutamate to form L-glutamate 5-phosphate. The protein is Glutamate 5-kinase of Mycobacterium leprae (strain Br4923).